The following is a 396-amino-acid chain: Elongation factor Tu (396 aa).

Residues 10-206 (KPHCNIGTIG…NVDEYIPQPE (197 aa)) form the tr-type G domain. The tract at residues 19–26 (GHVDHGKT) is G1. 19-26 (GHVDHGKT) is a GTP binding site. Thr26 contacts Mg(2+). The segment at 60-64 (GITIS) is G2. The G3 stretch occupies residues 81–84 (DCPG). Residues 81 to 85 (DCPGH) and 136 to 139 (NKCD) contribute to the GTP site. The tract at residues 136–139 (NKCD) is G4. Residues 174-176 (SAL) form a G5 region.

It belongs to the TRAFAC class translation factor GTPase superfamily. Classic translation factor GTPase family. EF-Tu/EF-1A subfamily. In terms of assembly, monomer.

It localises to the cytoplasm. It catalyses the reaction GTP + H2O = GDP + phosphate + H(+). Its function is as follows. GTP hydrolase that promotes the GTP-dependent binding of aminoacyl-tRNA to the A-site of ribosomes during protein biosynthesis. This is Elongation factor Tu from Bradyrhizobium sp. (strain BTAi1 / ATCC BAA-1182).